We begin with the raw amino-acid sequence, 30 residues long: Cyclotide cter-O (30 aa).

Residues 1–30 (GIPCGESCVFIPCITGIAGCSCKSKVCYRN) constitute a cross-link (cyclopeptide (Gly-Asn)). Disulfide bonds link C4-C20, C8-C22, and C13-C27.

Post-translationally, this is a cyclic peptide.

Its subcellular location is the secreted. Its function is as follows. Probably participates in a plant defense mechanism. The sequence is that of Cyclotide cter-O from Clitoria ternatea (Butterfly pea).